A 138-amino-acid chain; its full sequence is Large ribosomal subunit protein bL12c (138 aa).

This sequence belongs to the bacterial ribosomal protein bL12 family. Homodimer. Part of the ribosomal stalk of the 50S ribosomal subunit. Forms a multimeric L10(L12)X complex, where L10 forms an elongated spine to which 2 to 4 L12 dimers bind in a sequential fashion. Binds GTP-bound translation factors.

The protein resides in the plastid. Its function is as follows. Forms part of the ribosomal stalk which helps the ribosome interact with GTP-bound translation factors. Is thus essential for accurate translation. This Euglena longa (Euglenophycean alga) protein is Large ribosomal subunit protein bL12c.